The sequence spans 355 residues: NAD-dependent protein deacylase sirtuin-6 (355 aa).

Residue Ser2 is modified to N-acetylserine. Ser10 is modified (phosphoserine). One can recognise a Deacetylase sirtuin-type domain in the interval 27–272 (PEELERKVWE…TRLMKHLGLE (246 aa)). Lys33 bears the N6-acetyllysine mark. Residues Ala53, Thr57, Phe64, Arg65, Trp71, Gln113, and His133 each coordinate NAD(+). His133 acts as the Proton acceptor in catalysis. Zn(2+) contacts are provided by Cys141, Cys144, and Cys166. A Glycyl lysine isopeptide (Lys-Gly) (interchain with G-Cter in ubiquitin) cross-link involves residue Lys170. Residue Cys177 coordinates Zn(2+). 5 residues coordinate NAD(+): Gly214, Ser216, Asn240, Gln242, and Val258. The interval 284–355 (RALPPLPRPP…KRVKAEAVPS (72 aa)) is disordered. Pro residues predominate over residues 287 to 296 (PPLPRPPTPK). Thr294 is modified (phosphothreonine). Phosphoserine is present on residues Ser303 and Ser330.

It belongs to the sirtuin family. Class IV subfamily. Homodimer; binds to nucleosomes and DNA ends as a homodimer. Interacts with RELA; interferes with RELA binding to target DNA. Interacts with SMARCA5; promoting recruitment of SMARCA5/SNF2H to double-strand breaks (DSBs) sites. Interacts with the mTORC2 complex; preventing the ability of SIRT6 to deacetylate FOXO1. Interacts with the CLOCK-BMAL1 complex; recruited by the CLOCK-BMAL1 complex to regulate expression of clock-controlled genes. Interacts with CSNK2A2; preventing CSNK2A2 localization to the nucleus. Acetylated at Lys-33. Deacetylation at Lys-33 by SIRT1 promotes homomultimerization and binding to double-strand breaks (DSBs) sites. Post-translationally, phosphorylation at Ser-10 by MAPK8/JNK1 in response to oxidative stress stimulates the mono-ADP-ribosyltransferase activity on PARP1, leading to PARP1 recruitment to double-strand breaks (DSBs). In terms of processing, monoubiquitinated at Lys-170 by STUB1/CHIP, preventing its degradation by the proteasome. Sumoylated, leading to specifically decrease ability to deacetylate histone H3 at 'Lys-56' (H3K56ac).

The protein localises to the nucleus. It is found in the chromosome. The protein resides in the telomere. It localises to the endoplasmic reticulum. It catalyses the reaction N(6)-acetyl-L-lysyl-[protein] + NAD(+) + H2O = 2''-O-acetyl-ADP-D-ribose + nicotinamide + L-lysyl-[protein]. The catalysed reaction is N(6)-tetradecanoyl-L-lysyl-[protein] + NAD(+) + H2O = 2''-O-tetradecanoyl-ADP-D-ribose + nicotinamide + L-lysyl-[protein]. The enzyme catalyses N(6)-hexadecanoyl-L-lysyl-[protein] + NAD(+) + H2O = 2''-O-hexadecanoyl-ADP-D-ribose + nicotinamide + L-lysyl-[protein]. It carries out the reaction L-lysyl-[protein] + NAD(+) = N(6)-(ADP-D-ribosyl)-L-lysyl-[protein] + nicotinamide + H(+). It catalyses the reaction L-arginyl-[protein] + NAD(+) = N(omega)-(ADP-D-ribosyl)-L-arginyl-[protein] + nicotinamide + H(+). Its activity is regulated as follows. Compared to the defatty-acylase activity, the protein deacetylase activity is weak in vitro, and requires activation. The histone deacetylase activity is strongly activated upon binding to nucleosomes and chromatin in vivo. Two molecules of SIRT6 associate with the acidic patch of one nucleosome, while the C-terminal disordered region of SIRT6 associates with nucleosomal DNA, leading to efficient histone deacetylation. The protein-lysine deacetylase activity is also activated by long-chain free fatty-acids. NAD-dependent protein deacetylase, deacylase and mono-ADP-ribosyltransferase that plays an essential role in DNA damage repair, telomere maintenance, metabolic homeostasis, inflammation, tumorigenesis and aging. Displays protein-lysine deacetylase or defatty-acylase (demyristoylase and depalmitoylase) activity, depending on the context. Acts as a key histone deacetylase by catalyzing deacetylation of histone H3 at 'Lys-9', 'Lys-18' and 'Lys-56' (H3K9ac, H3K18ac and H3K56ac, respectively), suppressing target gene expression of several transcription factors, including NF-kappa-B. Acts as an inhibitor of transcription elongation by mediating deacetylation of H3K9ac and H3K56ac, preventing release of NELFE from chromatin and causing transcriptional pausing. Involved in DNA repair by promoting double-strand break (DSB) repair: acts as a DSB sensor by recognizing and binding DSB sites, leading to (1) recruitment of DNA repair proteins, such as SMARCA5/SNF2H, and (2) deacetylation of histone H3K9ac and H3K56ac. SIRT6 participation to DSB repair is probably involved in extension of life span. Also promotes DNA repair by deacetylating non-histone proteins, such as DDB2 and p53/TP53. Specifically deacetylates H3K18ac at pericentric heterochromatin, thereby maintaining pericentric heterochromatin silencing at centromeres and protecting against genomic instability and cellular senescence. Involved in telomere maintenance by catalyzing deacetylation of histone H3 in telomeric chromatin, regulating telomere position effect and telomere movement in response to DNA damage. Required for embryonic stem cell differentiation by mediating histone deacetylation of H3K9ac. Plays a major role in metabolism by regulating processes such as glycolysis, gluconeogenesis, insulin secretion and lipid metabolism. Inhibits glycolysis via histone deacetylase activity and by acting as a corepressor of the transcription factor HIF1A, thereby controlling the expression of multiple glycolytic genes. Has tumor suppressor activity by repressing glycolysis, thereby inhibiting the Warburg effect. Also regulates glycolysis and tumorigenesis by mediating deacetylation and nuclear export of non-histone proteins, such as isoform M2 of PKM (PKM2). Acts as a negative regulator of gluconeogenesis by mediating deacetylation of non-histone proteins, such as FOXO1 and KAT2A/GCN5. Promotes beta-oxidation of fatty acids during fasting by catalyzing deacetylation of NCOA2, inducing coactivation of PPARA. Acts as a regulator of lipid catabolism in brown adipocytes, both by catalyzing deacetylation of histones and non-histone proteins, such as FOXO1. Also acts as a regulator of circadian rhythms, both by regulating expression of clock-controlled genes involved in lipid and carbohydrate metabolism, and by catalyzing deacetylation of PER2. The defatty-acylase activity is specifically involved in regulation of protein secretion. Has high activity toward long-chain fatty acyl groups and mediates protein-lysine demyristoylation and depalmitoylation of target proteins, such as RRAS2 and TNF, thereby regulating their secretion. Also acts as a mono-ADP-ribosyltransferase by mediating mono-ADP-ribosylation of PARP1, TRIM28/KAP1 or SMARCC2/BAF170. Mono-ADP-ribosyltransferase activity is involved in DNA repair, cellular senescence, repression of LINE-1 retrotransposon elements and regulation of transcription. The sequence is that of NAD-dependent protein deacylase sirtuin-6 from Macaca fascicularis (Crab-eating macaque).